A 249-amino-acid chain; its full sequence is tRNA (guanine-N(1)-)-methyltransferase (249 aa).

Residues Gly113 and 133 to 138 each bind S-adenosyl-L-methionine; that span reads IGDFVV.

It belongs to the RNA methyltransferase TrmD family. In terms of assembly, homodimer.

It is found in the cytoplasm. The enzyme catalyses guanosine(37) in tRNA + S-adenosyl-L-methionine = N(1)-methylguanosine(37) in tRNA + S-adenosyl-L-homocysteine + H(+). Functionally, specifically methylates guanosine-37 in various tRNAs. In Neisseria meningitidis serogroup C / serotype 2a (strain ATCC 700532 / DSM 15464 / FAM18), this protein is tRNA (guanine-N(1)-)-methyltransferase.